Reading from the N-terminus, the 558-residue chain is uncharacterized protein (558 aa).

The tract at residues 396–420 (SSITDNDTDNDSGATESQQTDSEND) is disordered. Over residues 407-416 (SGATESQQTD) the composition is skewed to polar residues.

Belongs to the chlamydial CPn_0065/CT_288/TC_0561 family.

This is an uncharacterized protein from Chlamydia muridarum (strain MoPn / Nigg).